The following is a 249-amino-acid chain: Coproheme decarboxylase (249 aa).

Fe-coproporphyrin III contacts are provided by residues Arg131, 145 to 149, His172, and Gln185; that span reads YPMDK. Residue Tyr145 is part of the active site.

The protein belongs to the ChdC family. Type 1 subfamily. Requires Fe-coproporphyrin III as cofactor.

The catalysed reaction is Fe-coproporphyrin III + 2 H2O2 + 2 H(+) = heme b + 2 CO2 + 4 H2O. It catalyses the reaction Fe-coproporphyrin III + H2O2 + H(+) = harderoheme III + CO2 + 2 H2O. The enzyme catalyses harderoheme III + H2O2 + H(+) = heme b + CO2 + 2 H2O. It functions in the pathway porphyrin-containing compound metabolism; protoheme biosynthesis. Its function is as follows. Involved in coproporphyrin-dependent heme b biosynthesis. Catalyzes the decarboxylation of Fe-coproporphyrin III (coproheme) to heme b (protoheme IX), the last step of the pathway. The reaction occurs in a stepwise manner with a three-propionate intermediate. The sequence is that of Coproheme decarboxylase from Staphylococcus epidermidis (strain ATCC 12228 / FDA PCI 1200).